The following is a 124-amino-acid chain: MQNDQDYGNKLNPAWDEKGLITAVLTDAKTGLLLMVAHMNKESFELSMATKEATFWSRSRKKIWRKGEESGHVMKIQEIRIDCDQDTLWLKVIPMGPACHTGAQSCFYRLVEDGHLVTIPKDKI.

Aspartate 82 serves as a coordination point for Mg(2+). Residue cysteine 83 participates in Zn(2+) binding. Residues aspartate 84 and aspartate 86 each contribute to the Mg(2+) site. Zn(2+) is bound by residues cysteine 99 and cysteine 106.

The protein belongs to the PRA-CH family. Homodimer. Mg(2+) serves as cofactor. Zn(2+) is required as a cofactor.

It is found in the cytoplasm. The enzyme catalyses 1-(5-phospho-beta-D-ribosyl)-5'-AMP + H2O = 1-(5-phospho-beta-D-ribosyl)-5-[(5-phospho-beta-D-ribosylamino)methylideneamino]imidazole-4-carboxamide. Its pathway is amino-acid biosynthesis; L-histidine biosynthesis; L-histidine from 5-phospho-alpha-D-ribose 1-diphosphate: step 3/9. Functionally, catalyzes the hydrolysis of the adenine ring of phosphoribosyl-AMP. This is Phosphoribosyl-AMP cyclohydrolase from Zymomonas mobilis subsp. mobilis (strain ATCC 31821 / ZM4 / CP4).